The sequence spans 904 residues: MGSLRFSIPLDPFDSKRKRFHFSANPSQFPDQFPIHFVTSSIHATRASSIGSSTRVLDKIRVSSLGTEANENAINSASAAPVERSRSSKLSGDQRGTKKYVARKFSFRRGSNDLELENLFVNNGEIDVNYSAIKPGQSLEHCNGILKRLESCSDTNAIKFFDWMRCNGKLVGNFVAYSLILRVLGRREEWDRAEDLIKELCGFHEFQKSYQVFNTVIYACTKKGNVKLASKWFHMMLEFGVRPNVATIGMLMGLYQKNWNVEEAEFAFSHMRKFGIVCESAYSSMITIYTRLRLYDKAEEVIDLMKQDRVRLKLENWLVMLNAYSQQGKMELAESILVSMEAAGFSPNIIAYNTLITGYGKIFKMEAAQGLFHRLCNIGLEPDETSYRSMIEGWGRADNYEEAKHYYQELKRCGYKPNSFNLFTLINLQAKYGDRDGAIKTIEDMTGIGCQYSSILGIILQAYEKVGKIDVVPCVLKGSFHNHIRLNQTSFSSLVMAYVKHGMVDDCLGLLREKKWRDSAFESHLYHLLICSCKESGQLTDAVKIYNHKMESDEEINLHITSTMIDIYTVMGEFSEAEKLYLNLKSSGVVLDRIGFSIVVRMYVKAGSLEEACSVLEIMDEQKDIVPDVYLFRDMLRIYQKCDLQDKLQHLYYRIRKSGIHWNQEMYNCVINCCARALPLDELSGTFEEMIRYGFTPNTVTFNVLLDVYGKAKLFKKVNELFLLAKRHGVVDVISYNTIIAAYGKNKDYTNMSSAIKNMQFDGFSVSLEAYNTLLDAYGKDKQMEKFRSILKRMKKSTSGPDHYTYNIMINIYGEQGWIDEVADVLKELKESGLGPDLCSYNTLIKAYGIGGMVEEAVGLVKEMRGRNIIPDKVTYTNLVTALRRNDEFLEAIKWSLWMKQMGI.

Residues 1–61 constitute a chloroplast transit peptide; the sequence is MGSLRFSIPL…SSTRVLDKIR (61 aa). The segment at 75-94 is disordered; the sequence is NSASAAPVERSRSSKLSGDQ. PPR repeat units lie at residues 173-203, 209-243, 244-274, 278-312, 313-347, 348-382, 383-417, 418-452, 487-521, 522-553, 557-591, 592-622, 628-662, 663-697, 698-732, 733-766, 767-801, 802-836, 837-871, and 872-904; these read NFVAYSLILRVLGRREEWDRAEDLIKELCGF, SYQVFNTVIYACTKKGNVKLASKWFHMMLEFGVRP, NVATIGMLMGLYQKNWNVEEAEFAFSHMRKF, CESAYSSMITIYTRLRLYDKAEEVIDLMKQDRVRL, KLENWLVMLNAYSQQGKMELAESILVSMEAAGFSP, NIIAYNTLITGYGKIFKMEAAQGLFHRLCNIGLEP, DETSYRSMIEGWGRADNYEEAKHYYQELKRCGYKP, NSFNLFTLINLQAKYGDRDGAIKTIEDMTGIGCQY, NQTSFSSLVMAYVKHGMVDDCLGLLREKKWRDSAF, ESHLYHLLICSCKESGQLTDAVKIYNHKMESD, NLHITSTMIDIYTVMGEFSEAEKLYLNLKSSGVVL, DRIGFSIVVRMYVKAGSLEEACSVLEIMDEQ, DVYLFRDMLRIYQKCDLQDKLQHLYYRIRKSGIHW, NQEMYNCVINCCARALPLDELSGTFEEMIRYGFTP, NTVTFNVLLDVYGKAKLFKKVNELFLLAKRHGVVD, VISYNTIIAAYGKNKDYTNMSSAIKNMQFDGFSV, SLEAYNTLLDAYGKDKQMEKFRSILKRMKKSTSGP, DHYTYNIMINIYGEQGWIDEVADVLKELKESGLGP, DLCSYNTLIKAYGIGGMVEEAVGLVKEMRGRNIIP, and DKVTYTNLVTALRRNDEFLEAIKWSLWMKQMGI.

This sequence belongs to the PPR family. P subfamily.

The protein localises to the plastid. It localises to the chloroplast. This chain is Pentatricopeptide repeat-containing protein At4g30825, chloroplastic, found in Arabidopsis thaliana (Mouse-ear cress).